The sequence spans 247 residues: ATP synthase subunit a, chloroplastic (247 aa).

5 helical membrane-spanning segments follow: residues 38–58 (QVLI…ILVV), 95–115 (VPFI…GALL), 134–154 (INTT…AGIS), 199–219 (LVVV…VMFL), and 220–240 (GLFT…AYIG).

This sequence belongs to the ATPase A chain family. F-type ATPases have 2 components, CF(1) - the catalytic core - and CF(0) - the membrane proton channel. CF(1) has five subunits: alpha(3), beta(3), gamma(1), delta(1), epsilon(1). CF(0) has four main subunits: a, b, b' and c.

It localises to the plastid. The protein localises to the chloroplast thylakoid membrane. Key component of the proton channel; it plays a direct role in the translocation of protons across the membrane. In Lotus japonicus (Lotus corniculatus var. japonicus), this protein is ATP synthase subunit a, chloroplastic.